The chain runs to 110 residues: Large ribosomal subunit protein uL22 (110 aa).

The protein belongs to the universal ribosomal protein uL22 family. Part of the 50S ribosomal subunit.

Functionally, this protein binds specifically to 23S rRNA; its binding is stimulated by other ribosomal proteins, e.g. L4, L17, and L20. It is important during the early stages of 50S assembly. It makes multiple contacts with different domains of the 23S rRNA in the assembled 50S subunit and ribosome. In terms of biological role, the globular domain of the protein is located near the polypeptide exit tunnel on the outside of the subunit, while an extended beta-hairpin is found that lines the wall of the exit tunnel in the center of the 70S ribosome. This Alkaliphilus metalliredigens (strain QYMF) protein is Large ribosomal subunit protein uL22.